A 744-amino-acid chain; its full sequence is Vesicle-fusing ATPase (744 aa).

The residue at position 105 (Lys-105) is an N6-acetyllysine. Ser-207 is modified (phosphoserine). A Phosphotyrosine modification is found at Tyr-259. ATP-binding positions include 505 to 510 and 545 to 552; these read NGIIKW and PHSGKTAL. Thr-550 provides a ligand contact to Mg(2+). A Phosphoserine; by CDK16 modification is found at Ser-569.

It belongs to the AAA ATPase family. As to quaternary structure, homohexamer. Interacts with GABARAP and GABARAPL2. Interacts with GRIA2. Interacts with PLK2, leading to disrupt the interaction with GRIA2. Interacts with MUSK; may regulate MUSK endocytosis and activity. Interacts with CDK16. Requires Mg(2+) as cofactor. In terms of processing, phosphorylation at Ser-569 interferes with homohexamerization. In terms of tissue distribution, detected in brain (at protein level).

The protein localises to the cytoplasm. It catalyses the reaction ATP + H2O = ADP + phosphate + H(+). In terms of biological role, required for vesicle-mediated transport. Catalyzes the fusion of transport vesicles within the Golgi cisternae. Is also required for transport from the endoplasmic reticulum to the Golgi stack. Seems to function as a fusion protein required for the delivery of cargo proteins to all compartments of the Golgi stack independent of vesicle origin. Interaction with AMPAR subunit GRIA2 leads to influence GRIA2 membrane cycling. The sequence is that of Vesicle-fusing ATPase (Nsf) from Rattus norvegicus (Rat).